The primary structure comprises 192 residues: GTP cyclohydrolase 1 (192 aa).

Positions 82, 85, and 153 each coordinate Zn(2+).

This sequence belongs to the GTP cyclohydrolase I family. In terms of assembly, toroid-shaped homodecamer, composed of two pentamers of five dimers.

It carries out the reaction GTP + H2O = 7,8-dihydroneopterin 3'-triphosphate + formate + H(+). Its pathway is cofactor biosynthesis; 7,8-dihydroneopterin triphosphate biosynthesis; 7,8-dihydroneopterin triphosphate from GTP: step 1/1. This is GTP cyclohydrolase 1 from Rickettsia bellii (strain OSU 85-389).